The chain runs to 62 residues: U10-hottentoxin-Hj3a (62 aa).

Positions 1–22 (MQKLLIILILFCILKFNVDVEG) are cleaved as a signal peptide. 3 disulfide bridges follow: cysteine 28–cysteine 46, cysteine 33–cysteine 59, and cysteine 37–cysteine 61.

This sequence belongs to the short scorpion toxin superfamily. Potassium channel inhibitor family. Alpha-KTx 23 subfamily. In terms of tissue distribution, expressed by the venom gland.

The protein localises to the secreted. May block potassium channels. The polypeptide is U10-hottentoxin-Hj3a (Hottentotta judaicus (Black scorpion)).